Consider the following 130-residue polypeptide: S-adenosylmethionine decarboxylase proenzyme (130 aa).

Ser64 (schiff-base intermediate with substrate; via pyruvic acid) is an active-site residue. Ser64 is modified (pyruvic acid (Ser); by autocatalysis). His69 (proton acceptor; for processing activity) is an active-site residue. Cys84 serves as the catalytic Proton donor; for catalytic activity.

This sequence belongs to the prokaryotic AdoMetDC family. Type 1 subfamily. Heterotetramer of two alpha and two beta chains arranged as a dimer of alpha/beta heterodimers. The cofactor is pyruvate. Is synthesized initially as an inactive proenzyme. Formation of the active enzyme involves a self-maturation process in which the active site pyruvoyl group is generated from an internal serine residue via an autocatalytic post-translational modification. Two non-identical subunits are generated from the proenzyme in this reaction, and the pyruvate is formed at the N-terminus of the alpha chain, which is derived from the carboxyl end of the proenzyme. The post-translation cleavage follows an unusual pathway, termed non-hydrolytic serinolysis, in which the side chain hydroxyl group of the serine supplies its oxygen atom to form the C-terminus of the beta chain, while the remainder of the serine residue undergoes an oxidative deamination to produce ammonia and the pyruvoyl group blocking the N-terminus of the alpha chain.

The enzyme catalyses S-adenosyl-L-methionine + H(+) = S-adenosyl 3-(methylsulfanyl)propylamine + CO2. The protein operates within amine and polyamine biosynthesis; S-adenosylmethioninamine biosynthesis; S-adenosylmethioninamine from S-adenosyl-L-methionine: step 1/1. Its function is as follows. Catalyzes the decarboxylation of S-adenosylmethionine to S-adenosylmethioninamine (dcAdoMet), the propylamine donor required for the synthesis of the polyamines spermine and spermidine from the diamine putrescine. In Thermoplasma volcanium (strain ATCC 51530 / DSM 4299 / JCM 9571 / NBRC 15438 / GSS1), this protein is S-adenosylmethionine decarboxylase proenzyme.